A 423-amino-acid chain; its full sequence is Transcription factor AP-2-epsilon (423 aa).

The interval M1 to H108 is disordered. Residues G14 to L27 are compositionally biased toward low complexity. Residues Y50–Y55 carry the PPxY motif motif. Residues Q57–Y70 show a composition bias toward low complexity. The span at S79–S93 shows a compositional bias: polar residues. The tract at residues R276–D405 is H-S-H (helix-span-helix), dimerization.

The protein belongs to the AP-2 family. Binds DNA as a dimer. Can form homodimers or heterodimers with other AP-2 family members.

The protein localises to the nucleus. Functionally, sequence-specific DNA-binding protein that interacts with inducible viral and cellular enhancer elements to regulate transcription of selected genes. AP-2 factors bind to the consensus sequence 5'-GCCNNNGGC-3' and activate genes involved in a large spectrum of important biological functions. This Danio rerio (Zebrafish) protein is Transcription factor AP-2-epsilon.